The chain runs to 523 residues: Coatomer subunit delta-2 (523 aa).

The disordered stretch occupies residues 218-243 (DSFASKPKGRPSAAATAPGKGLGMKL). The 242-residue stretch at 282–523 (SDPVTVTIEE…RLVTANYQVV (242 aa)) folds into the MHD domain.

The protein belongs to the adaptor complexes medium subunit family. Delta-COP subfamily. Oligomeric complex that consists of at least the alpha, beta, beta', gamma, delta, epsilon and zeta subunits.

It is found in the cytoplasm. It localises to the golgi apparatus membrane. Its subcellular location is the cytoplasmic vesicle. The protein localises to the COPI-coated vesicle membrane. Its function is as follows. The coatomer is a cytosolic protein complex that binds to dilysine motifs and reversibly associates with Golgi non-clathrin-coated vesicles, which further mediate biosynthetic protein transport from the ER, via the Golgi up to the trans Golgi network. Coatomer complex is required for budding from Golgi membranes, and is essential for the retrograde Golgi-to-ER transport of dilysine-tagged proteins. The sequence is that of Coatomer subunit delta-2 from Oryza sativa subsp. japonica (Rice).